A 516-amino-acid chain; its full sequence is Sodium channel protein Nach (516 aa).

Residues 1–49 (MGHEEELSPEQVDLKVSPLMGSLKRTWNDFCATSSIHGLRYTRDEDTNR) are Cytoplasmic-facing. A helical transmembrane segment spans residues 50 to 70 (IVHFVWLLISLVMFICAVVMA). At 71–452 (RTFYIDFRSN…LVSNLGSAFS (382 aa)) the chain is on the extracellular side. N-linked (GlcNAc...) asparagine glycosylation is found at Asn128, Asn165, Asn220, and Asn348. A helical membrane pass occupies residues 453-473 (LFVGMSMLSVVEIMYYFSVIL). At 474 to 516 (RKNYVLECEARKKMLHKGPKFAWPKANDSHSKHQKSVFIIHKM) the chain is on the cytoplasmic side.

Belongs to the amiloride-sensitive sodium channel (TC 1.A.6) family.

The protein localises to the membrane. Its function is as follows. Part of a complex that plays a role in tracheal liquid clearance. Probable role in sodium transport. This chain is Sodium channel protein Nach (Nach), found in Drosophila ananassae (Fruit fly).